The following is a 165-amino-acid chain: Putative pre-16S rRNA nuclease (165 aa).

This sequence belongs to the YqgF nuclease family.

It localises to the cytoplasm. Its function is as follows. Could be a nuclease involved in processing of the 5'-end of pre-16S rRNA. The polypeptide is Putative pre-16S rRNA nuclease (Rhizobium meliloti (strain 1021) (Ensifer meliloti)).